The following is a 98-amino-acid chain: HssA/B-like protein 33 (98 aa).

Disordered stretches follow at residues 1-29 (MTLFSSISSMSSSMTSSRSSFSSFGSGTS) and 60-98 (AKSSGGSCGGKGGPHNHGHGNGHGPHGHGGKGSGGSCSC). Residues 60 to 72 (AKSSGGSCGGKGG) are compositionally biased toward gly residues. Over residues 73–88 (PHNHGHGNGHGPHGHG) the composition is skewed to basic residues. A compositionally biased stretch (gly residues) spans 89–98 (GKGSGGSCSC).

It belongs to the hssA/B family.

The protein is HssA/B-like protein 33 (hssl33) of Dictyostelium discoideum (Social amoeba).